Reading from the N-terminus, the 588-residue chain is MEPPIGFRASLFQFLLFLPYFIGLLFLGFIKGIVLCPLVCLVVTIGNSAVILSLLPVHIVWTFYSIVSAKQVGPILKIFLCLCLPAAIILWPIVGILGSVLGGALYGFFSPIFATFDAVGEGKPYQFFHCFYDGTWSTMQRSFTVVRDFKDVCFHSYFSLMDELKQSCPDRKYYEIRLLQLPGALVVSVLGILVDPPVISLVAICKSPYMLFKGWHRLFHDLIGREGPFLETMCVPIAGLAILLWPLAVTGAVIGSVISSIFLGAYAGVVSYQESSFYYGLCYIVASVSIYDEYSTDILDLPEGSCFPRPKYRRKDEEPTPFSGPVPRLGSVKNASSMRGGSVRVPMIDIKPLDLLNELFVECRRYGEVLATKGLINSKDIEEARSSKGSQVISVGLPAYGLLYEILRSVKANSSGLLLSDGVTEITTMNRPKDVFFDWFLNPFLILKEQMKATNLSEEEEEYLGRLVLLFGDPERLKSSNAISASPPLTERKRAELDAFARRMQGLTKTVSRYPTFRRHFVALVKKLSEDLDLKDNNSAKDESITEPPAPVKIISRIFSQRSFRRKGSVNGSDQESQKGVSRNVDIV.

Helical transmembrane passes span 14–34 (FLLF…KGIV), 49–69 (AVIL…IVSA), 78–98 (IFLC…GILG), 184–204 (ALVV…LVAI), 235–255 (VPIA…AVIG), 257–274 (VISS…SYQE), and 275–292 (SSFY…SIYD). A Phosphoserine modification is found at Ser-486. Positions 566–588 (RKGSVNGSDQESQKGVSRNVDIV) are disordered. Over residues 570–581 (VNGSDQESQKGV) the composition is skewed to polar residues.

It is found in the membrane. This is an uncharacterized protein from Arabidopsis thaliana (Mouse-ear cress).